Reading from the N-terminus, the 299-residue chain is Probable lipid kinase YegS (299 aa).

The region spanning 2–133 (AEFPASLLIL…IDMAQVNKQT (132 aa)) is the DAGKc domain. ATP is bound by residues T40, 66–72 (GDGTINE), and T95. 3 residues coordinate Mg(2+): L215, D218, and L220. E271 (proton acceptor) is an active-site residue.

This sequence belongs to the diacylglycerol/lipid kinase family. YegS lipid kinase subfamily. Mg(2+) is required as a cofactor. Ca(2+) serves as cofactor.

The protein localises to the cytoplasm. Its function is as follows. Probably phosphorylates lipids; the in vivo substrate is unknown. In Shigella flexneri, this protein is Probable lipid kinase YegS.